The chain runs to 256 residues: Trypsin, alkaline A (256 aa).

Residues 1-17 (MRLFLALLALGFAAVAA) form the signal peptide. Positions 18-24 (VPAYPQR) are cleaved as a propeptide — activation peptide. The region spanning 25–256 (IVGGSTTTIQ…RFANWIRNNS (232 aa)) is the Peptidase S1 domain. An intrachain disulfide couples cysteine 55 to cysteine 71. Active-site charge relay system residues include histidine 70 and aspartate 115. 2 cysteine pairs are disulfide-bonded: cysteine 180–cysteine 197 and cysteine 209–cysteine 233. The Charge relay system role is filled by serine 213.

The protein belongs to the peptidase S1 family. As to expression, midgut.

It is found in the secreted. The protein resides in the extracellular space. It carries out the reaction Preferential cleavage: Arg-|-Xaa, Lys-|-Xaa.. The polypeptide is Trypsin, alkaline A (Manduca sexta (Tobacco hawkmoth)).